Consider the following 123-residue polypeptide: Small ribosomal subunit protein uS12 (123 aa).

3-methylthioaspartic acid is present on aspartate 89.

This sequence belongs to the universal ribosomal protein uS12 family. Part of the 30S ribosomal subunit. Contacts proteins S8 and S17. May interact with IF1 in the 30S initiation complex.

Its function is as follows. With S4 and S5 plays an important role in translational accuracy. Functionally, interacts with and stabilizes bases of the 16S rRNA that are involved in tRNA selection in the A site and with the mRNA backbone. Located at the interface of the 30S and 50S subunits, it traverses the body of the 30S subunit contacting proteins on the other side and probably holding the rRNA structure together. The combined cluster of proteins S8, S12 and S17 appears to hold together the shoulder and platform of the 30S subunit. The protein is Small ribosomal subunit protein uS12 of Maridesulfovibrio salexigens (strain ATCC 14822 / DSM 2638 / NCIMB 8403 / VKM B-1763) (Desulfovibrio salexigens).